Here is a 137-residue protein sequence, read N- to C-terminus: Large ribosomal subunit protein uL16 (137 aa).

Belongs to the universal ribosomal protein uL16 family. Part of the 50S ribosomal subunit.

Binds 23S rRNA and is also seen to make contacts with the A and possibly P site tRNAs. This Pseudomonas entomophila (strain L48) protein is Large ribosomal subunit protein uL16.